Here is a 486-residue protein sequence, read N- to C-terminus: Glycogen synthase (486 aa).

Lys-20 provides a ligand contact to ADP-alpha-D-glucose.

This sequence belongs to the glycosyltransferase 1 family. Bacterial/plant glycogen synthase subfamily.

The enzyme catalyses [(1-&gt;4)-alpha-D-glucosyl](n) + ADP-alpha-D-glucose = [(1-&gt;4)-alpha-D-glucosyl](n+1) + ADP + H(+). Its pathway is glycan biosynthesis; glycogen biosynthesis. In terms of biological role, synthesizes alpha-1,4-glucan chains using ADP-glucose. The polypeptide is Glycogen synthase (Aeromonas salmonicida (strain A449)).